The following is a 685-amino-acid chain: Tyrosinase (685 aa).

S2 is subject to N-acetylserine. Positions 67, 97, 106, 278, 282, and 307 each coordinate Cu cation. The 2'-(S-cysteinyl)-histidine (Cys-His) cross-link spans C95 to H97. The propeptide at A409–I685 is could be involved in enzyme activation.

This sequence belongs to the tyrosinase family. The cofactor is Cu(2+).

The enzyme catalyses 2 L-dopa + O2 = 2 L-dopaquinone + 2 H2O. It catalyses the reaction L-tyrosine + O2 = L-dopaquinone + H2O. Its function is as follows. This is a copper-containing oxidase that functions in the formation of pigments such as melanins and other polyphenolic compounds. The polypeptide is Tyrosinase (T) (Neurospora crassa (strain ATCC 24698 / 74-OR23-1A / CBS 708.71 / DSM 1257 / FGSC 987)).